A 208-amino-acid polypeptide reads, in one-letter code: T-cell surface glycoprotein CD8 beta chain (208 aa).

The first 21 residues, 1-21, serve as a signal peptide directing secretion; that stretch reads MQPWLWLVFSVKLSALWGSSA. The Ig-like V-type domain maps to 22–131; it reads LLQTPSSLLV…MVVFGTGTKL (110 aa). The Extracellular segment spans residues 22-168; sequence LLQTPSSLLV…KTQKGLTCGL (147 aa). Residues Asn-34, Asn-88, and Asn-94 are each glycosylated (N-linked (GlcNAc...) asparagine). A disulfide bridge links Cys-41 with Cys-115. A helical transmembrane segment spans residues 169–189; sequence ITLSLLVACILVLLVSLSVAI. At 190–208 the chain is on the cytoplasmic side; sequence HFHCMRRRARIHFMKQFHK.

Forms disulfide-linked heterodimers with CD8A at the cell surface. Interacts with CD3D; this interaction couples TCR-CD3 with CD8. Interacts with LCK. In terms of processing, phosphorylated as a consequence of T-cell activation. Post-translationally, palmitoylated at the cytoplasmic tail and thereby targets the heterodimer CD8A/CD8B to lipid rafts unlike CD8A homodimers.

Its subcellular location is the cell membrane. Integral membrane glycoprotein that plays an essential role in the immune response and serves multiple functions in responses against both external and internal offenses. In T-cells, functions primarily as a coreceptor for MHC class I molecule:peptide complex. The antigens presented by class I peptides are derived from cytosolic proteins while class II derived from extracellular proteins. Interacts simultaneously with the T-cell receptor (TCR) and the MHC class I proteins presented by antigen presenting cells (APCs). In turn, recruits the Src kinase LCK to the vicinity of the TCR-CD3 complex. A palmitoylation site in the cytoplasmic tail of CD8B chain contributes to partitioning of CD8 into the plasma membrane lipid rafts where signaling proteins are enriched. Once LCK recruited, it initiates different intracellular signaling pathways by phosphorylating various substrates ultimately leading to lymphokine production, motility, adhesion and activation of cytotoxic T-lymphocytes (CTLs). Additionally, plays a critical role in thymic selection of CD8+ T-cells. This chain is T-cell surface glycoprotein CD8 beta chain (Cd8b), found in Rattus norvegicus (Rat).